A 67-amino-acid chain; its full sequence is uncharacterized protein (67 aa).

A run of 2 helical transmembrane segments spans residues 10 to 32 (NLSH…TAFI) and 44 to 66 (ATLT…MGQW).

The protein localises to the cell membrane. This is an uncharacterized protein from Archaeoglobus fulgidus (strain ATCC 49558 / DSM 4304 / JCM 9628 / NBRC 100126 / VC-16).